A 565-amino-acid chain; its full sequence is Proline--tRNA ligase (565 aa).

The protein belongs to the class-II aminoacyl-tRNA synthetase family. ProS type 1 subfamily. In terms of assembly, homodimer.

The protein resides in the cytoplasm. It catalyses the reaction tRNA(Pro) + L-proline + ATP = L-prolyl-tRNA(Pro) + AMP + diphosphate. Functionally, catalyzes the attachment of proline to tRNA(Pro) in a two-step reaction: proline is first activated by ATP to form Pro-AMP and then transferred to the acceptor end of tRNA(Pro). As ProRS can inadvertently accommodate and process non-cognate amino acids such as alanine and cysteine, to avoid such errors it has two additional distinct editing activities against alanine. One activity is designated as 'pretransfer' editing and involves the tRNA(Pro)-independent hydrolysis of activated Ala-AMP. The other activity is designated 'posttransfer' editing and involves deacylation of mischarged Ala-tRNA(Pro). The misacylated Cys-tRNA(Pro) is not edited by ProRS. In Hydrogenobaculum sp. (strain Y04AAS1), this protein is Proline--tRNA ligase.